Reading from the N-terminus, the 426-residue chain is Glutamate-1-semialdehyde 2,1-aminomutase (426 aa).

Lys-265 carries the post-translational modification N6-(pyridoxal phosphate)lysine.

Belongs to the class-III pyridoxal-phosphate-dependent aminotransferase family. HemL subfamily. Homodimer. Requires pyridoxal 5'-phosphate as cofactor.

It is found in the cytoplasm. It carries out the reaction (S)-4-amino-5-oxopentanoate = 5-aminolevulinate. It functions in the pathway porphyrin-containing compound metabolism; protoporphyrin-IX biosynthesis; 5-aminolevulinate from L-glutamyl-tRNA(Glu): step 2/2. This is Glutamate-1-semialdehyde 2,1-aminomutase from Escherichia coli O157:H7.